Here is a 529-residue protein sequence, read N- to C-terminus: GMP synthase [glutamine-hydrolyzing] (529 aa).

The Glutamine amidotransferase type-1 domain occupies 9–211 (RILILDFGSQ…VKDICGCECL (203 aa)). The active-site Nucleophile is the Cys-86. Active-site residues include His-185 and Glu-187. Residues 212–404 (WTPATIIDDA…LGLPYDMLYR (193 aa)) form the GMPS ATP-PPase domain. Residue 239-245 (SGGVDSS) participates in ATP binding.

In terms of assembly, homodimer.

The catalysed reaction is XMP + L-glutamine + ATP + H2O = GMP + L-glutamate + AMP + diphosphate + 2 H(+). Its pathway is purine metabolism; GMP biosynthesis; GMP from XMP (L-Gln route): step 1/1. In terms of biological role, catalyzes the synthesis of GMP from XMP. This Aeromonas hydrophila subsp. hydrophila (strain ATCC 7966 / DSM 30187 / BCRC 13018 / CCUG 14551 / JCM 1027 / KCTC 2358 / NCIMB 9240 / NCTC 8049) protein is GMP synthase [glutamine-hydrolyzing].